The following is a 152-amino-acid chain: Large ribosomal subunit protein uL13 (152 aa).

It belongs to the universal ribosomal protein uL13 family. In terms of assembly, part of the 50S ribosomal subunit.

In terms of biological role, this protein is one of the early assembly proteins of the 50S ribosomal subunit, although it is not seen to bind rRNA by itself. It is important during the early stages of 50S assembly. The protein is Large ribosomal subunit protein uL13 of Wolbachia pipientis subsp. Culex pipiens (strain wPip).